The following is a 242-amino-acid chain: Large ribosomal subunit protein uL1 (242 aa).

The protein belongs to the universal ribosomal protein uL1 family. In terms of assembly, part of the 50S ribosomal subunit.

Binds directly to 23S rRNA. The L1 stalk is quite mobile in the ribosome, and is involved in E site tRNA release. Its function is as follows. Protein L1 is also a translational repressor protein, it controls the translation of the L11 operon by binding to its mRNA. The chain is Large ribosomal subunit protein uL1 from Persephonella marina (strain DSM 14350 / EX-H1).